The chain runs to 443 residues: Cobyrinate a,c-diamide synthase (443 aa).

Residues 248–433 enclose the GATase cobBQ-type domain; sequence KIAVAYDKAF…LHNHAVANPY (186 aa). C327 serves as the catalytic Nucleophile.

Belongs to the CobB/CbiA family. Mg(2+) is required as a cofactor.

It catalyses the reaction cob(II)yrinate + 2 L-glutamine + 2 ATP + 2 H2O = cob(II)yrinate a,c diamide + 2 L-glutamate + 2 ADP + 2 phosphate + 2 H(+). The catalysed reaction is Ni-sirohydrochlorin + 2 L-glutamine + 2 ATP + 2 H2O = Ni-sirohydrochlorin a,c-diamide + 2 L-glutamate + 2 ADP + 2 phosphate + 2 H(+). The protein operates within cofactor biosynthesis; adenosylcobalamin biosynthesis; cob(II)yrinate a,c-diamide from sirohydrochlorin (anaerobic route): step 10/10. Catalyzes the ATP-dependent amidation of the two carboxylate groups at positions a and c of cobyrinate, using either L-glutamine or ammonia as the nitrogen source. Involved in the biosynthesis of the unique nickel-containing tetrapyrrole coenzyme F430, the prosthetic group of methyl-coenzyme M reductase (MCR), which plays a key role in methanogenesis and anaerobic methane oxidation. Catalyzes the ATP-dependent amidation of the two carboxylate groups at positions a and c of Ni-sirohydrochlorin, using L-glutamine or ammonia as the nitrogen source. The polypeptide is Cobyrinate a,c-diamide synthase (Methanocaldococcus jannaschii (strain ATCC 43067 / DSM 2661 / JAL-1 / JCM 10045 / NBRC 100440) (Methanococcus jannaschii)).